Consider the following 727-residue polypeptide: 1,4-alpha-glucan branching enzyme GlgB (727 aa).

Aspartate 405 (nucleophile) is an active-site residue. Glutamate 458 (proton donor) is an active-site residue.

This sequence belongs to the glycosyl hydrolase 13 family. GlgB subfamily. In terms of assembly, monomer.

It catalyses the reaction Transfers a segment of a (1-&gt;4)-alpha-D-glucan chain to a primary hydroxy group in a similar glucan chain.. Its pathway is glycan biosynthesis; glycogen biosynthesis. Catalyzes the formation of the alpha-1,6-glucosidic linkages in glycogen by scission of a 1,4-alpha-linked oligosaccharide from growing alpha-1,4-glucan chains and the subsequent attachment of the oligosaccharide to the alpha-1,6 position. This is 1,4-alpha-glucan branching enzyme GlgB from Yersinia pseudotuberculosis serotype O:1b (strain IP 31758).